Reading from the N-terminus, the 425-residue chain is uncharacterized protein (425 aa).

The F-box domain occupies 2–53; it reads SFNLLDLPIVPRQKALKYLEPIDLFELSLCSKRMAQSVRDLKIEASAHFITL.

This is an uncharacterized protein from Caenorhabditis elegans.